A 212-amino-acid chain; its full sequence is External core antigen (212 aa).

The N-terminal stretch at 1-19 is a signal peptide; the sequence is MQLFHLCLIISCSCPTVQA. Residues 25 to 27 are HBEAG; it reads GWL. Positions 165 to 212 are disordered; the sequence is NAPILSTLPETTVVRRRGRSPRRRTPSPRRRRSQSPRRRRSQSRESQC. Over residues 178–205 the composition is skewed to basic residues; it reads VRRRGRSPRRRTPSPRRRRSQSPRRRRS. One copy of the 1; half-length repeat lies at 184–190; the sequence is SPRRRTP. The 3 X 8 AA repeats of S-P-R-R-R-R-S-Q stretch occupies residues 184 to 206; it reads SPRRRTPSPRRRRSQSPRRRRSQ. Positions 184–212 are excised as a propeptide; the sequence is SPRRRTPSPRRRRSQSPRRRRSQSRESQC. 2 repeat units span residues 191 to 198 and 199 to 206.

This sequence belongs to the orthohepadnavirus precore antigen family. In terms of assembly, homodimerizes. Phosphorylated. Post-translationally, cleaved by host furin.

It is found in the secreted. The protein resides in the host nucleus. Its function is as follows. May regulate immune response to the intracellular capsid in acting as a T-cell tolerogen, by having an immunoregulatory effect which prevents destruction of infected cells by cytotoxic T-cells. This immune regulation may predispose to chronicity during perinatal infections and prevent severe liver injury during adult infections. The chain is External core antigen from Homo sapiens (Human).